A 392-amino-acid polypeptide reads, in one-letter code: 2-oxoisovalerate dehydrogenase subunit beta, mitochondrial (392 aa).

The transit peptide at 1-50 directs the protein to the mitochondrion; sequence MAAVAAFAGWLLRLRAAGADGPWRRLCGAGLSRGFLQSASAYGAAAQRRQ. Y152 is a binding site for thiamine diphosphate. Positions 178, 180, 181, 228, and 231 each coordinate K(+). K232 carries the N6-acetyllysine modification. N233 provides a ligand contact to K(+). An N6-acetyllysine modification is found at K241.

Heterotetramer of 2 alpha/BCKDHA and 2 beta chains/BCKDHB that forms the branched-chain alpha-keto acid decarboxylase (E1) component of the BCKD complex. The branched-chain alpha-ketoacid dehydrogenase is a large complex composed of three major building blocks E1, E2 and E3. It is organized around E2, a 24-meric cubic core composed of DBT, to which are associated 6 to 12 copies of E1, and approximately 6 copies of the dehydrogenase E3, a DLD dimer. Thiamine diphosphate serves as cofactor.

Its subcellular location is the mitochondrion matrix. The enzyme catalyses N(6)-[(R)-lipoyl]-L-lysyl-[protein] + 3-methyl-2-oxobutanoate + H(+) = N(6)-[(R)-S(8)-2-methylpropanoyldihydrolipoyl]-L-lysyl-[protein] + CO2. In terms of biological role, together with BCKDHA forms the heterotetrameric E1 subunit of the mitochondrial branched-chain alpha-ketoacid dehydrogenase (BCKD) complex. The BCKD complex catalyzes the multi-step oxidative decarboxylation of alpha-ketoacids derived from the branched-chain amino-acids valine, leucine and isoleucine producing CO2 and acyl-CoA which is subsequently utilized to produce energy. The E1 subunit catalyzes the first step with the decarboxylation of the alpha-ketoacid forming an enzyme-product intermediate. A reductive acylation mediated by the lipoylamide cofactor of E2 extracts the acyl group from the E1 active site for the next step of the reaction. This chain is 2-oxoisovalerate dehydrogenase subunit beta, mitochondrial (BCKDHB), found in Bos taurus (Bovine).